Reading from the N-terminus, the 201-residue chain is MQTSPLLETLMEALRCLPGVGPKSAQRMAFQLLQRDRSGGMRLAQALTRAMSEIGHCADCRTFTEQDICTICANPRRQQNGQICVVESPADIHAIEQTGQFAGRYFVLMGHLSPMDGIGPGDIGLDRLEQRLEKESVTEVILATNPTVEGDATANYIAEMCGQYGVVASRIAHGVPVGGELEMVDGTTLSHSLAGRHVIKF.

A C4-type zinc finger spans residues 57 to 72; the sequence is CADCRTFTEQDICTIC. The region spanning 81–176 is the Toprim domain; that stretch reads GQICVVESPA…VASRIAHGVP (96 aa).

The protein belongs to the RecR family.

May play a role in DNA repair. It seems to be involved in an RecBC-independent recombinational process of DNA repair. It may act with RecF and RecO. The chain is Recombination protein RecR from Serratia proteamaculans (strain 568).